Reading from the N-terminus, the 595-residue chain is Beta-(1--&gt;2)glucan export ATP-binding/permease protein NdvA (595 aa).

Helical transmembrane passes span 21–41 (FLLICTANITLAIITIAEPIL), 56–76 (LVTLAVWMCFGISNIIAYVLV), 129–149 (IWLEFMRQHLSTFVALFVLVP), 158–178 (LSIVLMVLAILYILIARLVMQ), and 252–272 (ISIVCVLLLGAFFVIKGQLSV). Residues 21–301 (FLLICTANIT…ISGFINLAVS (281 aa)) form the ABC transmembrane type-1 domain. An ABC transporter domain is found at 335–569 (IQFHHVTYEF…DGHFYKLLKR (235 aa)). ATP is bound at residue 368–375 (GPTGAGKT).

This sequence belongs to the ABC transporter superfamily. Beta-(1--&gt;2)glucan exporter (TC 3.A.1.108.1) family. Homodimer.

It is found in the cell inner membrane. The catalysed reaction is [(1-&gt;2)-beta-D-glucosyl](n)(in) + ATP + H2O = [(1-&gt;2)-beta-D-glucosyl](n)(out) + ADP + phosphate + H(+). Its function is as follows. Involved in beta-(1--&gt;2)glucan export. Transmembrane domains (TMD) form a pore in the inner membrane and the ATP-binding domain (NBD) is responsible for energy generation. In Bartonella bacilliformis, this protein is Beta-(1--&gt;2)glucan export ATP-binding/permease protein NdvA.